The following is a 98-amino-acid chain: Beta-2-microglobulin (98 aa).

Residues 4 to 92 (PKVQVYSRFP…HETLKEPQVY (89 aa)) form the Ig-like C1-type domain. A disulfide bridge connects residues cysteine 24 and cysteine 79.

It belongs to the beta-2-microglobulin family. In terms of assembly, heterodimer of an alpha chain and a beta chain. Beta-2-microglobulin is the beta-chain of major histocompatibility complex class I molecules.

The protein resides in the secreted. Component of the class I major histocompatibility complex (MHC). Involved in the presentation of peptide antigens to the immune system. This chain is Beta-2-microglobulin (B2M), found in Meleagris gallopavo (Wild turkey).